The sequence spans 282 residues: Energy-coupling factor transporter ATP-binding protein EcfA1 (282 aa).

Residues 6–243 enclose the ABC transporter domain; sequence VTVKHLSFTY…EVLIKSAGLE (238 aa). ATP is bound at residue 40 to 47; it reads GHNGSGKS.

This sequence belongs to the ABC transporter superfamily. Energy-coupling factor EcfA family. As to quaternary structure, forms a stable energy-coupling factor (ECF) transporter complex composed of 2 membrane-embedded substrate-binding proteins (S component), 2 ATP-binding proteins (A component) and 2 transmembrane proteins (T component).

Its subcellular location is the cell membrane. Its function is as follows. ATP-binding (A) component of a common energy-coupling factor (ECF) ABC-transporter complex. Unlike classic ABC transporters this ECF transporter provides the energy necessary to transport a number of different substrates. The polypeptide is Energy-coupling factor transporter ATP-binding protein EcfA1 (Lactobacillus johnsonii (strain CNCM I-12250 / La1 / NCC 533)).